The primary structure comprises 138 residues: MNQLLREVLTPDAERTQNFTVGDTVKVHYKIVESGKERVQIYEGVVISVANEANGKTFTVRRVSYDVGVERIFPLFSPKIAKIELIRKGKVRRAKLYYLRNLAGKAARIKELKGGKALVSEDRKRQQAAAATKSTTTE.

It belongs to the bacterial ribosomal protein bL19 family.

Functionally, this protein is located at the 30S-50S ribosomal subunit interface and may play a role in the structure and function of the aminoacyl-tRNA binding site. This chain is Large ribosomal subunit protein bL19, found in Leptospira interrogans serogroup Icterohaemorrhagiae serovar copenhageni (strain Fiocruz L1-130).